The sequence spans 301 residues: Nucleotide-binding protein Noca_2527 (301 aa).

Residue 26–33 (GMTGAGRS) coordinates ATP. Residue 77–80 (DVRS) participates in GTP binding.

The protein belongs to the RapZ-like family.

In terms of biological role, displays ATPase and GTPase activities. This is Nucleotide-binding protein Noca_2527 from Nocardioides sp. (strain ATCC BAA-499 / JS614).